The chain runs to 2168 residues: Bromodomain adjacent to zinc finger domain protein 2B (2168 aa).

8 disordered regions span residues 1–29, 140–348, 409–428, 459–479, 528–698, 719–740, 841–872, and 1021–1043; these read MESG…ASVV, FAPP…KQPQ, LKAG…SELR, SNPK…ENNH, STPF…LHIA, GTSS…RRVT, MEGR…PPNV, and RKKA…LNKE. A compositionally biased stretch (low complexity) spans 8-29; it reads PSSAASSTTPTSSSTPSVASVV. 2 stretches are compositionally biased toward polar residues: residues 146–163 and 171–193; these read NHDS…SNRN and GSIN…STTA. Low complexity-rich tracts occupy residues 194 to 204 and 240 to 263; these read SSSMGQTKSTS and ESSS…ISSS. The span at 264–291 shows a compositional bias: acidic residues; it reads DSDDLEEDEEEEDQSIEESEDDDSDSES. Residues 307–325 are compositionally biased toward basic and acidic residues; it reads SDPKADGQKATEKAQEKRI. Residues 335-348 show a composition bias toward low complexity; the sequence is SQTHSFQSQQKQPQ. 2 stretches are compositionally biased toward polar residues: residues 461 to 479 and 528 to 551; these read PKAT…ENNH and STPF…QTPV. Positions 592-605 are enriched in basic and acidic residues; that stretch reads RGTDSDIPSSKDSE. The span at 606 to 663 shows a compositional bias: acidic residues; sequence DSNEDEEEDDEEEDEEDDEDDESDDSQSESDSNSESDTEGSEEEDDDDKDQDESDSDT. A compositionally biased stretch (polar residues) spans 670–693; that stretch reads MKLNKTTSSVKSPSMSLTGHSTPR. A compositionally biased stretch (low complexity) spans 720-732; that stretch reads TSSSTLTSSPHSG. The MBD domain maps to 739 to 810; that stretch reads VTDERELRIP…DNFSFSAKIR (72 aa). A compositionally biased stretch (basic and acidic residues) spans 841-861; that stretch reads MEGRRGRPPNPDRQRAREESR. A coiled-coil region spans residues 883 to 1061; it reads AKLLRKLQAQ…ELEMAKELKK (179 aa). One can recognise a DDT domain in the interval 1087–1152; the sequence is GSTFSDCLMV…LSAAVCDPGL (66 aa). The disordered stretch occupies residues 1265 to 1341; sequence KRDTSGGIDL…CEDEDEGDQA (77 aa). Positions 1297–1321 are enriched in acidic residues; the sequence is SDYDDDDDDDSDDQGDEDDEDEEDK. Basic and acidic residues predominate over residues 1322 to 1331; sequence EDKKGKKTDI. Residues 1334-1375 are a coiled coil; the sequence is DEDEGDQAASVEELEKQIEKLSKQQSQYRRKLFDASHSLRSV. A Glycyl lysine isopeptide (Lys-Gly) (interchain with G-Cter in SUMO2) cross-link involves residue K1425. K1462 bears the N6-acetyllysine mark. Residues S1465 and S1467 each carry the phosphoserine modification. The segment covering 1503-1533 has biased composition (polar residues); the sequence is SGKHSLGSVQSTATQSNVEKADSNNLFNTGS. 3 disordered regions span residues 1503 to 1542, 1582 to 1607, and 1670 to 1694; these read SGKH…FYSP, SLVT…SSAQ, and TSNV…AQPA. Over residues 1588–1600 the composition is skewed to pro residues; the sequence is SQPPSKSPSPTPA. A compositionally biased stretch (polar residues) spans 1670–1692; sequence TSNVASSKSESPVPQNEKATSAQ. S1680 is modified (phosphoserine). The PHD-type zinc-finger motif lies at 1931–1981; sequence KVYCQICRKGDNEELLLLCDGCDKGCHTYCHRPKITTIPDGDWFCPACIAK. A disordered region spans residues 1998–2040; sequence KTNESKKGKKVTLTGDTEDEDSASTSSSLKRGNKDLKKRKMEE. The residue at position 2014 (T2014) is a Phosphothreonine. S2019 is subject to Phosphoserine. Positions 2029 to 2040 are enriched in basic and acidic residues; it reads GNKDLKKRKMEE. Positions 2060–2164 constitute a Bromo domain; that stretch reads RDDSKDLALC…KYFEKKWTDT (105 aa).

Belongs to the WAL family. As to quaternary structure, component of the BRF-1 ISWI chromatin remodeling complex, at least composed of SMARCA1 and BAZ2B, which regulates the spacing of histone octamers on the DNA template to facilitate access to DNA. Within the BRF-1 ISWI chromatin remodeling complex interacts with SMARCA1; the interaction is direct. Component of the BRF-5 ISWI chromatin remodeling complex, at least composed of SMARCA5/SNF2H and BAZ2B, which regulates the spacing of histone octamers on the DNA template to facilitate access to DNA. Within the BRF-5 ISWI chromatin remodeling complex interacts with SMARCA5/SNF2H; the interaction is direct. Interacts with acetylated lysine residues on histone H1.4, H2A, H2B, H3 and H4 (in vitro). Interacts with EHMT1. As to expression, expressed at varying levels in several tissues, whereas a smaller transcript was expressed specifically in testis.

The protein localises to the nucleus. In terms of biological role, regulatory subunit of the ATP-dependent BRF-1 and BRF-5 ISWI chromatin remodeling complexes, which form ordered nucleosome arrays on chromatin and facilitate access to DNA during DNA-templated processes such as DNA replication, transcription, and repair. Both complexes regulate the spacing of nucleosomes along the chromatin and have the ability to slide mononucleosomes to the center of a DNA template. The BRF-1 ISWI chromatin remodeling complex has a lower ATP hydrolysis rate than the BRF-5 ISWI chromatin remodeling complex. Chromatin reader protein, which may play a role in transcriptional regulation via interaction with ISWI. Involved in positively modulating the rate of age-related behavioral deterioration. Represses the expression of mitochondrial function-related genes, perhaps by occupying their promoter regions, working in concert with histone methyltransferase EHMT1. This Homo sapiens (Human) protein is Bromodomain adjacent to zinc finger domain protein 2B (BAZ2B).